The chain runs to 727 residues: NADH-ubiquinone oxidoreductase 75 kDa subunit, mitochondrial (727 aa).

The N-terminal 23 residues, 1 to 23, are a transit peptide targeting the mitochondrion; the sequence is MLRIPVRKALVGLSKSPKGCVRT. Residues 30–108 enclose the 2Fe-2S ferredoxin-type domain; sequence NLIEVFVDGQ…GWNILTNSEK (79 aa). 3 residues coordinate [2Fe-2S] cluster: cysteine 64, cysteine 75, and cysteine 78. N6-acetyllysine is present on lysine 84. Cysteine 92 lines the [2Fe-2S] cluster pocket. Positions 108–147 constitute a 4Fe-4S His(Cys)3-ligated-type domain; that stretch reads KSKKAREGVMEFLLANHPLDCPICDQGGECDLQDQSMMFG. The [4Fe-4S] cluster site is built by histidine 124, cysteine 128, cysteine 131, cysteine 137, cysteine 176, cysteine 179, cysteine 182, and cysteine 226. The 4Fe-4S Mo/W bis-MGD-type domain occupies 245–301; it reads TRKTESIDVMDAVGSNIVVSTRTGEVMRILPRMHEDINEEWISDKTRFAYDGLKRQR. An N6-acetyllysine mark is found at lysine 467, lysine 499, and lysine 709.

It belongs to the complex I 75 kDa subunit family. Core subunit of respiratory chain NADH dehydrogenase (Complex I) which is composed of 45 different subunits. This is the largest subunit of complex I and it is a component of the iron-sulfur (IP) fragment of the enzyme. Complex I associates with ubiquinol-cytochrome reductase complex (Complex III) to form supercomplexes. Interacts with MDM2 and AKAP1. [2Fe-2S] cluster is required as a cofactor. [4Fe-4S] cluster serves as cofactor.

Its subcellular location is the mitochondrion inner membrane. The enzyme catalyses a ubiquinone + NADH + 5 H(+)(in) = a ubiquinol + NAD(+) + 4 H(+)(out). Core subunit of the mitochondrial membrane respiratory chain NADH dehydrogenase (Complex I) which catalyzes electron transfer from NADH through the respiratory chain, using ubiquinone as an electron acceptor. Essential for catalysing the entry and efficient transfer of electrons within complex I. Plays a key role in the assembly and stability of complex I and participates in the association of complex I with ubiquinol-cytochrome reductase complex (Complex III) to form supercomplexes. The protein is NADH-ubiquinone oxidoreductase 75 kDa subunit, mitochondrial (NDUFS1) of Macaca fascicularis (Crab-eating macaque).